The chain runs to 45 residues: Large ribosomal subunit protein bL34 (45 aa).

The tract at residues 23–45 is disordered; that stretch reads ETPGGKKVLSARRAKGRKNLIAK. The span at 31 to 45 shows a compositional bias: basic residues; the sequence is LSARRAKGRKNLIAK.

This sequence belongs to the bacterial ribosomal protein bL34 family.

This chain is Large ribosomal subunit protein bL34, found in Elusimicrobium minutum (strain Pei191).